We begin with the raw amino-acid sequence, 563 residues long: GTPase Obg (563 aa).

Residues 2-168 (SDFVDRVTVH…RDVILELKSI (167 aa)) enclose the Obg domain. The OBG-type G domain maps to 169–349 (ADVALVGFPS…LNFALSALVH (181 aa)). Residues 175–182 (GFPSAGKS), 200–204 (FTTLV), 221–224 (DVPG), 301–304 (NKID), and 330–332 (STA) contribute to the GTP site. Mg(2+) contacts are provided by Ser-182 and Thr-202. The OCT domain occupies 383-469 (DEGGSALEFT…ARMVEFDWDP (87 aa)). The disordered stretch occupies residues 529–563 (RKAGHWADPTVDDDRHDETSLFGHGESSEDGETEE).

It belongs to the TRAFAC class OBG-HflX-like GTPase superfamily. OBG GTPase family. In terms of assembly, monomer. It depends on Mg(2+) as a cofactor.

It is found in the cytoplasm. Functionally, an essential GTPase which binds GTP, GDP and possibly (p)ppGpp with moderate affinity, with high nucleotide exchange rates and a fairly low GTP hydrolysis rate. Plays a role in control of the cell cycle, stress response, ribosome biogenesis and in those bacteria that undergo differentiation, in morphogenesis control. This chain is GTPase Obg, found in Bifidobacterium longum (strain DJO10A).